We begin with the raw amino-acid sequence, 134 residues long: Large ribosomal subunit protein eL32 (134 aa).

The protein belongs to the eukaryotic ribosomal protein eL32 family.

The chain is Large ribosomal subunit protein eL32 (RpL32) from Drosophila acanthoptera (Fruit fly).